Reading from the N-terminus, the 413-residue chain is Aspartate kinase (413 aa).

2 ACT domains span residues 267 to 341 and 347 to 413; these read LTIR…GDTK and IVGV…RQGE.

Belongs to the aspartokinase family. Homotrimer. In the presence of inhibitory amino acids the Stokes radius of the protein increases, suggesting its oligomeric state may change.

It localises to the cytoplasm. The enzyme catalyses L-aspartate + ATP = 4-phospho-L-aspartate + ADP. It participates in amino-acid biosynthesis; L-lysine biosynthesis via DAP pathway; (S)-tetrahydrodipicolinate from L-aspartate: step 1/4. It functions in the pathway amino-acid biosynthesis; L-methionine biosynthesis via de novo pathway; L-homoserine from L-aspartate: step 1/3. The protein operates within amino-acid biosynthesis; L-threonine biosynthesis; L-threonine from L-aspartate: step 1/5. With respect to regulation, activated by L-lysine, L-methionine, and L-isoleucine. L-threonine, at low concentrations, is a mild activator and has a weak inhibitory effect only at concentrations over 10 mM. Strongly feedback inhibited by the concerted combination of L-lysine and L-threonine and slightly feedback inhibited by the concerted combination of L-threonine and L-methionine. Activated by the combination of L-methionine and L-lysine, L-methionine and L-isoleucine and L-lysine and L-isoleucine. Functionally, involved in the biosynthesis of L-aspartate-beta-semialdehyde which is a central intermediate in the biosynthesis of different amino acids (L-lysine, L-methionine, L-threonine). Catalyzes the phosphorylation of the beta-carboxyl group of L-aspartate to yield 4-phospho-L-aspartate. The chain is Aspartate kinase from Pseudomonas fluorescens (strain SBW25).